A 165-amino-acid polypeptide reads, in one-letter code: Myosin regulatory light chain 2B, cardiac muscle isoform (165 aa).

Ala-2 is modified (n,N,N-trimethylalanine). EF-hand domains are found at residues 23-58 (TQIQ…LGRL), 93-128 (DPEE…QEGR), and 129-164 (FSQE…GEEK). Ca(2+) is bound by residues Asp-36, Asn-38, Asp-40, and Asp-47.

In terms of assembly, myosin is a hexamer of 2 heavy chains and 4 light chains. The N-terminus is blocked. N,N,N-trimethylalanine, found in other myosin light chains would not have been detected in the N-terminal tryptic peptide in PubMed:7319048 because it would remain trimethylated and ninhydrin negative after hydrolysis.

The polypeptide is Myosin regulatory light chain 2B, cardiac muscle isoform (Gallus gallus (Chicken)).